We begin with the raw amino-acid sequence, 184 residues long: Putative manganese efflux pump MntP (184 aa).

Transmembrane regions (helical) follow at residues Leu5–Thr25, Ile38–Ile58, Val67–Ile87, Leu107–Leu127, Leu133–Ile153, and Lys164–Tyr184.

It belongs to the MntP (TC 9.B.29) family.

The protein localises to the cell membrane. Functionally, probably functions as a manganese efflux pump. The polypeptide is Putative manganese efflux pump MntP (Methanobrevibacter smithii (strain ATCC 35061 / DSM 861 / OCM 144 / PS)).